The sequence spans 353 residues: Photosystem II D2 protein (353 aa).

An N-acetylthreonine modification is found at threonine 2. Threonine 2 carries the post-translational modification Phosphothreonine. Residues 41-61 form a helical membrane-spanning segment; it reads CAYFALGGWFTGTTFVTSWYT. Histidine 118 contacts chlorophyll a. A helical transmembrane segment spans residues 125–141; the sequence is GFMLRQFELARSVQLRP. Residues glutamine 130 and asparagine 143 each contribute to the pheophytin a site. The chain crosses the membrane as a helical span at residues 153–166; that stretch reads VFVSVFLIYPLGQS. Histidine 198 lines the chlorophyll a pocket. A helical membrane pass occupies residues 208–228; it reads AALLCAIHGATVENTLFEDGD. Positions 215 and 262 each coordinate a plastoquinone. A Fe cation-binding site is contributed by histidine 215. Histidine 269 provides a ligand contact to Fe cation. The chain crosses the membrane as a helical span at residues 279 to 295; sequence GLWMSALGVVGLALNLR.

Belongs to the reaction center PufL/M/PsbA/D family. In terms of assembly, PSII is composed of 1 copy each of membrane proteins PsbA, PsbB, PsbC, PsbD, PsbE, PsbF, PsbH, PsbI, PsbJ, PsbK, PsbL, PsbM, PsbT, PsbX, PsbY, PsbZ, Psb30/Ycf12, at least 3 peripheral proteins of the oxygen-evolving complex and a large number of cofactors. It forms dimeric complexes. The cofactor is The D1/D2 heterodimer binds P680, chlorophylls that are the primary electron donor of PSII, and subsequent electron acceptors. It shares a non-heme iron and each subunit binds pheophytin, quinone, additional chlorophylls, carotenoids and lipids. There is also a Cl(-1) ion associated with D1 and D2, which is required for oxygen evolution. The PSII complex binds additional chlorophylls, carotenoids and specific lipids..

The protein resides in the plastid. Its subcellular location is the chloroplast thylakoid membrane. The catalysed reaction is 2 a plastoquinone + 4 hnu + 2 H2O = 2 a plastoquinol + O2. Functionally, photosystem II (PSII) is a light-driven water:plastoquinone oxidoreductase that uses light energy to abstract electrons from H(2)O, generating O(2) and a proton gradient subsequently used for ATP formation. It consists of a core antenna complex that captures photons, and an electron transfer chain that converts photonic excitation into a charge separation. The D1/D2 (PsbA/PsbD) reaction center heterodimer binds P680, the primary electron donor of PSII as well as several subsequent electron acceptors. D2 is needed for assembly of a stable PSII complex. The polypeptide is Photosystem II D2 protein (Platanus occidentalis (Sycamore)).